Reading from the N-terminus, the 152-residue chain is Deoxyuridine 5'-triphosphate nucleotidohydrolase (152 aa).

Substrate-binding positions include 72–74 (RSG), N85, and 89–91 (TID).

Belongs to the dUTPase family. It depends on Mg(2+) as a cofactor.

The enzyme catalyses dUTP + H2O = dUMP + diphosphate + H(+). Its pathway is pyrimidine metabolism; dUMP biosynthesis; dUMP from dCTP (dUTP route): step 2/2. Its function is as follows. This enzyme is involved in nucleotide metabolism: it produces dUMP, the immediate precursor of thymidine nucleotides and it decreases the intracellular concentration of dUTP so that uracil cannot be incorporated into DNA. This Bradyrhizobium sp. (strain ORS 278) protein is Deoxyuridine 5'-triphosphate nucleotidohydrolase.